Consider the following 316-residue polypeptide: MSTVQVPKLNTKDLLTLEELTKEEIISLIEFAIYLKKNKQEPLLQGKILGLIFDKHSTRTRVSFEAGMVQLGGHGMFLSGKEMQMGRGETVSDTAKVLSQYIDGIMIRTFSHADVEELAKESSIPVINGLTDDHHPCQALADLMTIYEETNTFKGIKLAYVGDGNNVCHSLLLASAKVGMHMTVATPIGYEPNEEIVKKALAIAKETGAEIEILHNPELAVNEADFIYTDVWMSMGQEGEEEKYTLFQPYQINNELVKHAKQTYRFLHCLPAHREEEVTGEIIDGPKSIVFEQAGNRLHAQKALLVSLFKNVEELS.

Residues 57–60 (STRT), Gln84, Arg108, and 135–138 (HPCQ) each bind carbamoyl phosphate. Residues Asn166, Asp230, and 234-235 (SM) each bind L-ornithine. Residues 269 to 270 (CL) and Arg297 contribute to the carbamoyl phosphate site.

Belongs to the aspartate/ornithine carbamoyltransferase superfamily. OTCase family.

Its subcellular location is the cytoplasm. It catalyses the reaction carbamoyl phosphate + L-ornithine = L-citrulline + phosphate + H(+). It functions in the pathway amino-acid degradation; L-arginine degradation via ADI pathway; carbamoyl phosphate from L-arginine: step 2/2. Reversibly catalyzes the transfer of the carbamoyl group from carbamoyl phosphate (CP) to the N(epsilon) atom of ornithine (ORN) to produce L-citrulline. This Bacillus cereus (strain AH187) protein is Ornithine carbamoyltransferase.